The following is a 714-amino-acid chain: Fatty acid oxidation complex subunit alpha (714 aa).

The tract at residues M1 to P190 is enoyl-CoA hydratase. Residues A306–Q714 are 3-hydroxyacyl-CoA dehydrogenase.

The protein in the N-terminal section; belongs to the enoyl-CoA hydratase/isomerase family. It in the central section; belongs to the 3-hydroxyacyl-CoA dehydrogenase family. As to quaternary structure, heterotetramer of two alpha chains (FadJ) and two beta chains (FadI).

Its subcellular location is the cytoplasm. It carries out the reaction a (3S)-3-hydroxyacyl-CoA = a (2E)-enoyl-CoA + H2O. It catalyses the reaction a 4-saturated-(3S)-3-hydroxyacyl-CoA = a (3E)-enoyl-CoA + H2O. The enzyme catalyses a (3S)-3-hydroxyacyl-CoA + NAD(+) = a 3-oxoacyl-CoA + NADH + H(+). The catalysed reaction is (3S)-3-hydroxybutanoyl-CoA = (3R)-3-hydroxybutanoyl-CoA. It participates in lipid metabolism; fatty acid beta-oxidation. Catalyzes the formation of a hydroxyacyl-CoA by addition of water on enoyl-CoA. Also exhibits 3-hydroxyacyl-CoA epimerase and 3-hydroxyacyl-CoA dehydrogenase activities. This is Fatty acid oxidation complex subunit alpha from Escherichia coli O8 (strain IAI1).